We begin with the raw amino-acid sequence, 1331 residues long: Contactin-associated protein-like 2 (1331 aa).

Residues 1–27 (MQAAPRAGCGAALLLWIVSSCLCRAWT) form the signal peptide. Topologically, residues 28–1262 (APSTSQKCDE…IRNGVNRNSA (1235 aa)) are extracellular. Positions 35-181 (CDEPLVSGLP…IGLRIEVYGC (147 aa)) constitute an F5/8 type C domain. Cys-35 and Cys-181 are disulfide-bonded. The 153-residue stretch at 216–368 (FKTSESEGVI…SNVGNLSFSC (153 aa)) folds into the Laminin G-like 1 domain. Asn-289, Asn-346, Asn-363, Asn-379, Asn-436, Asn-506, Asn-507, and Asn-546 each carry an N-linked (GlcNAc...) asparagine glycan. Cys-336 and Cys-368 form a disulfide bridge. In terms of domain architecture, Laminin G-like 2 spans 401 to 552 (FRTWNPNGLL…SFANVSIDMC (152 aa)). 4 disulfides stabilise this stretch: Cys-520–Cys-552, Cys-558–Cys-569, Cys-563–Cys-578, and Cys-580–Cys-590. The EGF-like 1 domain maps to 554–591 (IIDRCVPNHCEHGGKCSQTWDSFKCTCDETGYSGATCH). The region spanning 592–798 (NSIYEPSCEA…LRCQGDRNYW (207 aa)) is the Fibrinogen C-terminal domain. Asn-630 and Asn-735 each carry an N-linked (GlcNAc...) asparagine glycan. The Laminin G-like 3 domain occupies 799–963 (NAASFPNPSS…KVTSGFISGC (165 aa)). Cystine bridges form between Cys-936/Cys-963, Cys-967/Cys-980, Cys-974/Cys-989, and Cys-991/Cys-1001. The region spanning 963–1002 (CSGHCTSYGTNCENGGKCLERYHGYSCDCSNTAYDGTFCN) is the EGF-like 2 domain. Residues 1026–1045 (ARDSSSRVDNAPDQQNSHPD) form a disordered region. Residues 1055–1214 (FSTTKAPCIL…IQGELVESNC (160 aa)) enclose the Laminin G-like 4 domain. 2 N-linked (GlcNAc...) asparagine glycosylation sites follow: Asn-1116 and Asn-1198. Cys-1178 and Cys-1214 form a disulfide bridge. Residues 1263–1283 (IIGGVIAVVIFTILCTLVFLI) traverse the membrane as a helical segment. Over 1284–1331 (RYMFRHKGTYHTNEAKGAESAESADAAIMNNDPNFTETIDESKKEWLI) the chain is Cytoplasmic. Ser-1303 and Ser-1306 each carry phosphoserine.

This sequence belongs to the neurexin family. In terms of assembly, interacts (via C-terminus) with KCNA2. Interacts with GPR37. Predominantly expressed in nervous system.

The protein localises to the membrane. It is found in the cell projection. It localises to the axon. The protein resides in the cell junction. Its subcellular location is the paranodal septate junction. Its function is as follows. Required for gap junction formation. Required, with CNTNAP1, for radial and longitudinal organization of myelinated axons. Plays a role in the formation of functional distinct domains critical for saltatory conduction of nerve impulses in myelinated nerve fibers. Demarcates the juxtaparanodal region of the axo-glial junction. This Homo sapiens (Human) protein is Contactin-associated protein-like 2 (CNTNAP2).